A 270-amino-acid polypeptide reads, in one-letter code: Formamidopyrimidine-DNA glycosylase (270 aa).

The active-site Schiff-base intermediate with DNA is Pro2. Glu3 serves as the catalytic Proton donor. Lys58 functions as the Proton donor; for beta-elimination activity in the catalytic mechanism. 3 residues coordinate DNA: His91, Arg110, and Arg151. The FPG-type zinc finger occupies Phe236–Ser270. The active-site Proton donor; for delta-elimination activity is Arg260.

This sequence belongs to the FPG family. As to quaternary structure, monomer. Zn(2+) serves as cofactor.

It carries out the reaction Hydrolysis of DNA containing ring-opened 7-methylguanine residues, releasing 2,6-diamino-4-hydroxy-5-(N-methyl)formamidopyrimidine.. The enzyme catalyses 2'-deoxyribonucleotide-(2'-deoxyribose 5'-phosphate)-2'-deoxyribonucleotide-DNA = a 3'-end 2'-deoxyribonucleotide-(2,3-dehydro-2,3-deoxyribose 5'-phosphate)-DNA + a 5'-end 5'-phospho-2'-deoxyribonucleoside-DNA + H(+). Involved in base excision repair of DNA damaged by oxidation or by mutagenic agents. Acts as a DNA glycosylase that recognizes and removes damaged bases. Has a preference for oxidized purines, such as 7,8-dihydro-8-oxoguanine (8-oxoG). Has AP (apurinic/apyrimidinic) lyase activity and introduces nicks in the DNA strand. Cleaves the DNA backbone by beta-delta elimination to generate a single-strand break at the site of the removed base with both 3'- and 5'-phosphates. This is Formamidopyrimidine-DNA glycosylase from Pseudomonas fluorescens (strain ATCC BAA-477 / NRRL B-23932 / Pf-5).